Reading from the N-terminus, the 90-residue chain is RNA-binding protein Hfq (90 aa).

Residues 9-68 (DPFLNALRRERVPVSIYLVNGIKLQGQVESFDQFVILLKNTVSQMVYKHAISTVVPARPF) enclose the Sm domain. A disordered region spans residues 71–90 (TGHQNAQGGYGPQDDVPSGE).

The protein belongs to the Hfq family. Homohexamer.

RNA chaperone that binds small regulatory RNA (sRNAs) and mRNAs to facilitate mRNA translational regulation in response to envelope stress, environmental stress and changes in metabolite concentrations. Also binds with high specificity to tRNAs. This Shewanella putrefaciens (strain CN-32 / ATCC BAA-453) protein is RNA-binding protein Hfq.